The following is a 121-amino-acid chain: Large ribosomal subunit protein bL12 (121 aa).

The protein belongs to the bacterial ribosomal protein bL12 family. In terms of assembly, homodimer. Part of the ribosomal stalk of the 50S ribosomal subunit. Forms a multimeric L10(L12)X complex, where L10 forms an elongated spine to which 2 to 4 L12 dimers bind in a sequential fashion. Binds GTP-bound translation factors.

Functionally, forms part of the ribosomal stalk which helps the ribosome interact with GTP-bound translation factors. Is thus essential for accurate translation. This Lactococcus lactis subsp. cremoris (strain MG1363) protein is Large ribosomal subunit protein bL12.